The primary structure comprises 137 residues: Nucleoside diphosphate kinase (137 aa).

Positions 11, 59, 87, 93, 104, and 114 each coordinate ATP. The active-site Pros-phosphohistidine intermediate is the histidine 117.

It belongs to the NDK family. Homotetramer. It depends on Mg(2+) as a cofactor.

It is found in the cytoplasm. It catalyses the reaction a 2'-deoxyribonucleoside 5'-diphosphate + ATP = a 2'-deoxyribonucleoside 5'-triphosphate + ADP. The enzyme catalyses a ribonucleoside 5'-diphosphate + ATP = a ribonucleoside 5'-triphosphate + ADP. Its function is as follows. Major role in the synthesis of nucleoside triphosphates other than ATP. The ATP gamma phosphate is transferred to the NDP beta phosphate via a ping-pong mechanism, using a phosphorylated active-site intermediate. The sequence is that of Nucleoside diphosphate kinase from Parafrankia sp. (strain EAN1pec).